A 208-amino-acid polypeptide reads, in one-letter code: RxLR effector protein Avr1 (208 aa).

The N-terminal stretch at 1–22 (MGLMHRVLLLATFALLCMHAKA) is a signal peptide. A RxLR-dEER motif is present at residues 41 to 54 (RQLRTATMSDDEAR). The tract at residues 70–92 (KIESWIQNKVTDDFVLSELKLVR) is W1-motif. The tract at residues 93-110 (LPGTSLADDPNFKLFQKF) is linker region ln1. The interval 111–136 (KIGGWLEEKATTTKAWENLGLDSLPF) is W2-motif. Residues 137 to 157 (DQVSKIDEFKTYTQYVTVLNK) form a Y-motif region. A linker region ln2 region spans residues 158–170 (KASKLDIDQWHGL). Residues 170-208 (LLSGGSPEELMAKAMILRTLGRDVLERRVMLGGHVVVPF) form a T-region region.

Belongs to the RxLR effector family. Interacts with host exocyst component Sec5.

It is found in the secreted. Its subcellular location is the host cytoplasm. It localises to the host nucleus. The protein resides in the host peroxisome. Secreted effector that acts as an elicitor of hypersensitive response (HR) specifically on plants carrying defense protein R1, through its interaction with this protein. Also acts as a virulence factor that promotes colonization and suppresses cell death induced by CRN2 as well as callose deposition, a hallmark of basal defense. Interacts with host exocyst component Sec5 and thereby disturbs vesicle trafficking, a cellular process that is important for basal defense. By targeting and stabilizing Sec5 in the cytoplasm, the exocyst complex is thus out of balance and not able to mediate the focal secretion of PR-1 and callose. This chain is RxLR effector protein Avr1, found in Phytophthora infestans (strain T30-4) (Potato late blight agent).